Consider the following 229-residue polypeptide: V-type proton ATPase subunit E (229 aa).

The protein belongs to the V-ATPase E subunit family. As to quaternary structure, V-ATPase is a heteromultimeric enzyme composed of a peripheral catalytic V1 complex (components A to H) attached to an integral membrane V0 proton pore complex (components: a, c, c', c'' and d).

Subunit of the peripheral V1 complex of vacuolar ATPase essential for assembly or catalytic function. V-ATPase is responsible for acidifying a variety of intracellular compartments in eukaryotic cells. This is V-type proton ATPase subunit E (VATE) from Spinacia oleracea (Spinach).